Reading from the N-terminus, the 80-residue chain is Lantibiotic Flvalpha.b (80 aa).

A propeptide spans 1-38 (MNKNPIYRSEEEAKNIACGNVAAELDENSQALDAINGA) (cleaved by FlvT). Thr43 and Thr47 each carry 2,3-didehydrobutyrine; by FlvM1. The beta-methyllanthionine (Thr-Cys); by FlvM1 cross-link spans 52-55 (TVGC). The segment at residues 58-68 (SYGLGNGGYCC) is a cross-link (lanthionine (Ser-Cys); by FlvM1). Cross-links (beta-methyllanthionine (Thr-Cys); by FlvM1) lie at residues 69 to 74 (TYTVEC) and 71 to 78 (TVECSKTC).

In terms of processing, the lanthionine formed by Ser-58 and Cys-68 forms a putative lipid II binding motif. Post-translationally, maturation of FlvA1 peptides involves the enzymatic conversion of Thr, and Ser into dehydrated AA and the formation of thioether bonds with cysteines. Modifications are processed by the flavecin synthetase FlvM1. This is followed by membrane translocation and cleavage of the modified precursor. Contains DL-lanthionine and DL-beta-methyllanthionine, when coepressed in E.coli with the flavecin synthetase FlvM1.

The protein localises to the secreted. In terms of biological role, lanthionine-containing peptide antibiotic (lantibiotic) only active on Gram-positive bacteria in synergy with Flvbeta peptides, which are encoded by the same operon than Flvalpha.a. Shows antibacterial activity in synergy with Flvbeta.b, Flvbeta.c, Flvbeta.e and Flvbeta.g. Does not show antibacterial activity when tested with Flvbeta.a, Flvbeta.d, Flvbeta.f and Flvbeta.h. The bactericidal activity of lantibiotics is based on depolarization of energized bacterial cytoplasmic membranes, initiated by the formation of aqueous transmembrane pores. The chain is Lantibiotic Flvalpha.b from Ruminococcus flavefaciens.